The sequence spans 122 residues: Large ribosomal subunit protein uL14 (122 aa).

The protein belongs to the universal ribosomal protein uL14 family. Part of the 50S ribosomal subunit. Forms a cluster with proteins L3 and L19. In the 70S ribosome, L14 and L19 interact and together make contacts with the 16S rRNA in bridges B5 and B8.

Functionally, binds to 23S rRNA. Forms part of two intersubunit bridges in the 70S ribosome. The polypeptide is Large ribosomal subunit protein uL14 (Flavobacterium psychrophilum (strain ATCC 49511 / DSM 21280 / CIP 103535 / JIP02/86)).